A 295-amino-acid polypeptide reads, in one-letter code: Carbapenem-hydrolyzing beta-lactamase transcriptional activator (295 aa).

The region spanning 5-62 is the HTH lysR-type domain; sequence LPLNALRAFEASARYLNFTKAGLELHVSQAAVSQQVRTLEQMLGVALFTRVPRGLQLT. Residues 22-41 constitute a DNA-binding region (H-T-H motif); that stretch reads FTKAGLELHVSQAAVSQQVR.

The protein belongs to the LysR transcriptional regulatory family.

This protein is a positive regulator of gene expression of carbapenem-hydrolyzing beta-lactamase (NmcA). The polypeptide is Carbapenem-hydrolyzing beta-lactamase transcriptional activator (nmcR) (Enterobacter cloacae).